Here is a 215-residue protein sequence, read N- to C-terminus: Fibrillarin-like rRNA/tRNA 2'-O-methyltransferase (215 aa).

The interval 1 to 29 (MKASSSLPDGVQRRQFDNRSRLTTHGTTV) is disordered. The span at 11–20 (VQRRQFDNRS) shows a compositional bias: basic and acidic residues. S-adenosyl-L-methionine contacts are provided by residues 76–77 (TT), 92–93 (EF), 117–118 (DA), and 138–141 (DVAT).

It belongs to the methyltransferase superfamily. Fibrillarin family. Interacts with nop5. Component of box C/D small ribonucleoprotein (sRNP) particles that contain rpl7ae, FlpA and nop5, plus a guide RNA.

Involved in pre-rRNA and tRNA processing. Utilizes the methyl donor S-adenosyl-L-methionine to catalyze the site-specific 2'-hydroxyl methylation of ribose moieties in rRNA and tRNA. Site specificity is provided by a guide RNA that base pairs with the substrate. Methylation occurs at a characteristic distance from the sequence involved in base pairing with the guide RNA. This Haloquadratum walsbyi (strain DSM 16790 / HBSQ001) protein is Fibrillarin-like rRNA/tRNA 2'-O-methyltransferase.